A 188-amino-acid polypeptide reads, in one-letter code: Pyridoxal 5'-phosphate synthase subunit PdxT (188 aa).

47-49 (GES) contributes to the L-glutamine binding site. Cys-79 serves as the catalytic Nucleophile. L-glutamine contacts are provided by residues Arg-105 and 134 to 135 (IR). Catalysis depends on charge relay system residues His-170 and Glu-172.

The protein belongs to the glutaminase PdxT/SNO family. In terms of assembly, in the presence of PdxS, forms a dodecamer of heterodimers. Only shows activity in the heterodimer.

The enzyme catalyses aldehydo-D-ribose 5-phosphate + D-glyceraldehyde 3-phosphate + L-glutamine = pyridoxal 5'-phosphate + L-glutamate + phosphate + 3 H2O + H(+). It carries out the reaction L-glutamine + H2O = L-glutamate + NH4(+). The protein operates within cofactor biosynthesis; pyridoxal 5'-phosphate biosynthesis. In terms of biological role, catalyzes the hydrolysis of glutamine to glutamate and ammonia as part of the biosynthesis of pyridoxal 5'-phosphate. The resulting ammonia molecule is channeled to the active site of PdxS. The chain is Pyridoxal 5'-phosphate synthase subunit PdxT from Listeria monocytogenes serotype 4a (strain HCC23).